The following is a 549-amino-acid chain: MFS-type transporter TwmF (549 aa).

4 helical membrane-spanning segments follow: residues 29-49 (IVIG…VLTI), 63-83 (NFIW…PLFG), 99-119 (VAIF…AMLI), and 126-146 (GVGS…LVPL). N-linked (GlcNAc...) asparagine glycosylation is present at Asn-151. The next 10 helical transmembrane spans lie at 155 to 175 (ILMS…GAIV), 182 to 202 (WVFY…FIFL), 221 to 241 (LVGN…LSYA), 249 to 269 (SWHT…FAGL), 291 to 311 (IILA…LFFL), 328 to 348 (VALL…AIAL), 355 to 375 (KPVH…FTLF), 390 to 410 (IVAF…QAFI), 421 to 441 (AWYF…AAIF), and 502 to 522 (VSIA…DVGL).

This sequence belongs to the major facilitator superfamily.

The protein resides in the membrane. Functionally, MFS efflux transporter; part of the gene cluster that mediates the biosynthesis of wortmanamides A and B, reduced long-chain polyketides amidated with a specific omega-amino acid, 5-aminopentanoic acid (5PA). In Talaromyces wortmannii (Penicillium wortmannii), this protein is MFS-type transporter TwmF.